A 226-amino-acid chain; its full sequence is UPF0758 protein SPJ_1027 (226 aa).

One can recognise an MPN domain in the interval 103–225 (SILSSQKLAK…YFSYREKTDL (123 aa)). Positions 174, 176, and 187 each coordinate Zn(2+). Positions 174-187 (HNHPSGAVAPSQND) match the JAMM motif motif.

Belongs to the UPF0758 family.

This chain is UPF0758 protein SPJ_1027, found in Streptococcus pneumoniae (strain JJA).